The chain runs to 400 residues: PHD finger protein 24 (400 aa).

A lipid anchor (N-myristoyl glycine) is attached at glycine 2. The segment at 30 to 108 (DRPSIRRTGE…FTPPAFIRPT (79 aa)) is disordered. At arginine 36 the chain carries Omega-N-methylarginine. Serine 43 carries the post-translational modification Phosphoserine. Phosphothreonine is present on threonine 47. Residue serine 51 is modified to Phosphoserine. Positions 78 to 97 (AWERLRDGRGVEPEEFDRTG) are enriched in basic and acidic residues. The segment at 129–190 (NDEMCDVCEV…TGWSCHYCDN (62 aa)) adopts a PHD-type zinc-finger fold.

This Pongo abelii (Sumatran orangutan) protein is PHD finger protein 24.